Consider the following 327-residue polypeptide: Movement protein (327 aa).

Positions 297-327 (SASSSNTENELARVSQNIDLLKNKLKEICGE) form a coiled coil.

This sequence belongs to the caulimoviridae movement protein family. Homotrimer, through the coiled-coil domain. Interacts with VAP. May interact (via N-terminus) with host prenylated Rab acceptor protein 1D (PRA1D).

It localises to the host cell junction. The protein resides in the host plasmodesma. Functionally, transports viral genome to neighboring plant cells directly through plasmosdesmata, without any budding. The movement protein allows efficient cell to cell propagation, by bypassing the host cell wall barrier. Acts by forming tubules structures that increase the size exclusion limit (SEL) of plasmodesmata, thereby allowing viral ribonucleocapsids to spread directly to neighboring cells. The sequence is that of Movement protein from Arabidopsis thaliana (Mouse-ear cress).